The following is a 264-amino-acid chain: S-adenosylmethionine decarboxylase proenzyme (264 aa).

Ser-112 functions as the Schiff-base intermediate with substrate; via pyruvic acid in the catalytic mechanism. Position 112 is a pyruvic acid (Ser); by autocatalysis (Ser-112). Catalysis depends on His-117, which acts as the Proton acceptor; for processing activity. The Proton donor; for catalytic activity role is filled by Cys-140.

The protein belongs to the prokaryotic AdoMetDC family. Type 2 subfamily. In terms of assembly, heterooctamer of four alpha and four beta chains arranged as a tetramer of alpha/beta heterodimers. It depends on pyruvate as a cofactor. In terms of processing, is synthesized initially as an inactive proenzyme. Formation of the active enzyme involves a self-maturation process in which the active site pyruvoyl group is generated from an internal serine residue via an autocatalytic post-translational modification. Two non-identical subunits are generated from the proenzyme in this reaction, and the pyruvate is formed at the N-terminus of the alpha chain, which is derived from the carboxyl end of the proenzyme. The post-translation cleavage follows an unusual pathway, termed non-hydrolytic serinolysis, in which the side chain hydroxyl group of the serine supplies its oxygen atom to form the C-terminus of the beta chain, while the remainder of the serine residue undergoes an oxidative deamination to produce ammonia and the pyruvoyl group blocking the N-terminus of the alpha chain.

The enzyme catalyses S-adenosyl-L-methionine + H(+) = S-adenosyl 3-(methylsulfanyl)propylamine + CO2. The protein operates within amine and polyamine biosynthesis; S-adenosylmethioninamine biosynthesis; S-adenosylmethioninamine from S-adenosyl-L-methionine: step 1/1. Its function is as follows. Catalyzes the decarboxylation of S-adenosylmethionine to S-adenosylmethioninamine (dcAdoMet), the propylamine donor required for the synthesis of the polyamines spermine and spermidine from the diamine putrescine. The sequence is that of S-adenosylmethionine decarboxylase proenzyme from Yersinia enterocolitica serotype O:8 / biotype 1B (strain NCTC 13174 / 8081).